A 135-amino-acid chain; its full sequence is ATP synthase epsilon chain, chloroplastic (135 aa).

It belongs to the ATPase epsilon chain family. In terms of assembly, F-type ATPases have 2 components, CF(1) - the catalytic core - and CF(0) - the membrane proton channel. CF(1) has five subunits: alpha(3), beta(3), gamma(1), delta(1), epsilon(1). CF(0) has three main subunits: a, b and c.

The protein resides in the plastid. It localises to the chloroplast thylakoid membrane. Functionally, produces ATP from ADP in the presence of a proton gradient across the membrane. The sequence is that of ATP synthase epsilon chain, chloroplastic from Stigeoclonium helveticum (Green alga).